A 483-amino-acid chain; its full sequence is Homoserine O-acetyltransferase (483 aa).

The region spanning 47–346 (NVILICHALT…HFGHDAFLLE (300 aa)) is the AB hydrolase-1 domain. Residue S152 is the Nucleophile of the active site. R221 lines the substrate pocket. Active-site residues include D307 and H340. D341 is a substrate binding site. 2 CBS domains span residues 367–423 (MSED…KISS) and 428–483 (LSRD…KGTK).

The protein belongs to the AB hydrolase superfamily. MetX family. In terms of assembly, homodimer.

It localises to the cytoplasm. It catalyses the reaction L-homoserine + acetyl-CoA = O-acetyl-L-homoserine + CoA. It participates in amino-acid biosynthesis; L-methionine biosynthesis via de novo pathway; O-acetyl-L-homoserine from L-homoserine: step 1/1. Functionally, transfers an acetyl group from acetyl-CoA to L-homoserine, forming acetyl-L-homoserine. This chain is Homoserine O-acetyltransferase, found in Methanohalophilus mahii (strain ATCC 35705 / DSM 5219 / SLP).